The primary structure comprises 157 residues: MMPDSPIALHLDLQVATQAEQLPSQEEFESWVRLALGNVMPEAEMTIRLVDEAESQQLNHTYRGKDKPTNVLSFPFESPPEVELPLLGDLVICVPVVEQEAEIQGKSLTAHWAHMVVHGCLHLLGYDHIIDSEAEEMESLETQLIESLGFPNPYKEQ.

Zn(2+) contacts are provided by H118, H122, and H128.

The protein belongs to the endoribonuclease YbeY family. Zn(2+) serves as cofactor.

It localises to the cytoplasm. In terms of biological role, single strand-specific metallo-endoribonuclease involved in late-stage 70S ribosome quality control and in maturation of the 3' terminus of the 16S rRNA. This Shewanella loihica (strain ATCC BAA-1088 / PV-4) protein is Endoribonuclease YbeY.